The following is a 578-amino-acid chain: Kelch repeat-containing protein kel-10 (578 aa).

Residues 51-118 form the BTB domain; sequence PTVTLVLRNN…PKAFEQGIKP (68 aa). In terms of domain architecture, BACK spans 158–236; the sequence is IKIFRLALLY…NSPLQSDRMA (79 aa). Kelch repeat units lie at residues 265–315, 316–362, 368–414, 416–462, 464–510, and 512–558; these read AIVC…VVED, KLIV…RIND, LIFA…TIDN, IVVI…SIMN, VCMI…QMDT, and SIYV…TLSD.

The polypeptide is Kelch repeat-containing protein kel-10 (Caenorhabditis elegans).